Here is a 64-residue protein sequence, read N- to C-terminus: Large ribosomal subunit protein bL32 (64 aa).

The tract at residues 1 to 23 (MAVQKSRVTPSRRGQRRSHDALA) is disordered.

It belongs to the bacterial ribosomal protein bL32 family.

This is Large ribosomal subunit protein bL32 from Xylella fastidiosa (strain M23).